Here is a 518-residue protein sequence, read N- to C-terminus: Probable thiamine biosynthetic bifunctional enzyme (518 aa).

Positions Met-1–Arg-229 are thiamine-phosphate synthase. 4-amino-2-methyl-5-(diphosphooxymethyl)pyrimidine-binding positions include Gln-40 to Lys-44 and Asn-72. Mg(2+)-binding residues include Asp-73 and Asp-92. A 4-amino-2-methyl-5-(diphosphooxymethyl)pyrimidine-binding site is contributed by Ser-111. Residue Thr-137–Thr-139 participates in 2-[(2R,5Z)-2-carboxy-4-methylthiazol-5(2H)-ylidene]ethyl phosphate binding. Lys-140 is a binding site for 4-amino-2-methyl-5-(diphosphooxymethyl)pyrimidine. 2-[(2R,5Z)-2-carboxy-4-methylthiazol-5(2H)-ylidene]ethyl phosphate is bound by residues Gly-173 and Val-199–Ser-200. Residues Ser-230–Glu-518 are hydroxyethylthiazole kinase. Position 281 (Met-281) interacts with 5-(2-hydroxyethyl)-4-methylthiazole. Residues Lys-355 and Ser-403 each coordinate ATP. 5-(2-hydroxyethyl)-4-methylthiazole is bound at residue Ala-430. Cys-433 serves as the catalytic Proton acceptor; for hydroxyethylthiazole kinase activity.

This sequence in the N-terminal section; belongs to the thiamine-phosphate synthase family. In the C-terminal section; belongs to the Thz kinase family. Requires Mg(2+) as cofactor.

It carries out the reaction 2-[(2R,5Z)-2-carboxy-4-methylthiazol-5(2H)-ylidene]ethyl phosphate + 4-amino-2-methyl-5-(diphosphooxymethyl)pyrimidine + 2 H(+) = thiamine phosphate + CO2 + diphosphate. It catalyses the reaction 2-(2-carboxy-4-methylthiazol-5-yl)ethyl phosphate + 4-amino-2-methyl-5-(diphosphooxymethyl)pyrimidine + 2 H(+) = thiamine phosphate + CO2 + diphosphate. The enzyme catalyses 4-methyl-5-(2-phosphooxyethyl)-thiazole + 4-amino-2-methyl-5-(diphosphooxymethyl)pyrimidine + H(+) = thiamine phosphate + diphosphate. The catalysed reaction is 5-(2-hydroxyethyl)-4-methylthiazole + ATP = 4-methyl-5-(2-phosphooxyethyl)-thiazole + ADP + H(+). It functions in the pathway cofactor biosynthesis; thiamine diphosphate biosynthesis; 4-methyl-5-(2-phosphoethyl)-thiazole from 5-(2-hydroxyethyl)-4-methylthiazole: step 1/1. It participates in cofactor biosynthesis; thiamine diphosphate biosynthesis; thiamine phosphate from 4-amino-2-methyl-5-diphosphomethylpyrimidine and 4-methyl-5-(2-phosphoethyl)-thiazole: step 1/1. Functionally, condenses 4-methyl-5-(beta-hydroxyethyl)thiazole monophosphate (THZ-P) and 2-methyl-4-amino-5-hydroxymethyl pyrimidine pyrophosphate (HMP-PP) to form thiamine monophosphate (TMP). This chain is Probable thiamine biosynthetic bifunctional enzyme (thi4), found in Schizosaccharomyces pombe (strain 972 / ATCC 24843) (Fission yeast).